Consider the following 263-residue polypeptide: Small ribosomal subunit protein uS2 (263 aa).

This sequence belongs to the universal ribosomal protein uS2 family.

This is Small ribosomal subunit protein uS2 from Roseiflexus castenholzii (strain DSM 13941 / HLO8).